Consider the following 454-residue polypeptide: UPF0210 protein BAD_1323 (454 aa).

This sequence belongs to the UPF0210 family. In terms of assembly, homodimer.

The polypeptide is UPF0210 protein BAD_1323 (Bifidobacterium adolescentis (strain ATCC 15703 / DSM 20083 / NCTC 11814 / E194a)).